A 255-amino-acid polypeptide reads, in one-letter code: MNDYIVVKCGGSMLDQLNDVFFDCIKKLQQQYKVVIVHGGGPEIDAKLKDCNINVEKRDGLRVTPKEVMDVVQMVLCGSTNKKLVMNLQKHNLLAVGCSGCDGNLLQVQPVSGEIGYVGEVSYVETALLKGLINMNYIPVIAPVGINDNEIYNINADTAAAGIAAALSAKELILITDVDGILHEGKLVKKTDESEIATFIEKGVITGGMIPKVQAALASLKMGVQKISIVNGTKDFTEDTGGCIGTTVTRGVSIV.

Residues 40–41, Arg-62, and Asn-153 each bind substrate; that span reads GG.

It belongs to the acetylglutamate kinase family. ArgB subfamily.

The protein resides in the cytoplasm. The catalysed reaction is N-acetyl-L-glutamate + ATP = N-acetyl-L-glutamyl 5-phosphate + ADP. It participates in amino-acid biosynthesis; L-arginine biosynthesis; N(2)-acetyl-L-ornithine from L-glutamate: step 2/4. Its function is as follows. Catalyzes the ATP-dependent phosphorylation of N-acetyl-L-glutamate. The protein is Acetylglutamate kinase of Bacillus cereus (strain 03BB102).